A 341-amino-acid chain; its full sequence is uncharacterized protein (341 aa).

The tract at residues 125–146 is disordered; sequence DTVKHNGSGPRPEQASSHVHYS.

This sequence belongs to the cycloisomerase 2 family.

This is an uncharacterized protein from Lactococcus lactis subsp. cremoris (strain MG1363).